A 431-amino-acid polypeptide reads, in one-letter code: BEL1-like homeodomain protein 5 (431 aa).

The SR/KY domain stretch occupies residues 80-96 (PIYLKAAQELLNEIVNV). Positions 128-199 (GVAALQMKKA…AVKDMISLQI (72 aa)) are BELL domain. The homeobox DNA-binding region spans 228–290 (AWRPQRGLPE…NARVRMWKPL (63 aa)). Residues 302-312 (EESRKGSDRYS) are compositionally biased toward basic and acidic residues. The tract at residues 302–333 (EESRKGSDRYSTKGSSSKQPYNNTTSNESSNT) is disordered. Residues 313-322 (TKGSSSKQPY) show a composition bias toward polar residues. Residues 323–333 (NNTTSNESSNT) are compositionally biased toward low complexity.

It belongs to the TALE/BELL homeobox family. May form heterodimeric complexes with TALE/KNOX proteins. Interacts with OFP1.

Its subcellular location is the nucleus. The chain is BEL1-like homeodomain protein 5 (BLH5) from Arabidopsis thaliana (Mouse-ear cress).